Reading from the N-terminus, the 224-residue chain is Protein HLJ1 (224 aa).

Residues 18 to 87 (DKHEFYEILK…RSIYDRIGRD (70 aa)) form the J domain. Positions 84–93 (IGRDPDDRQM) are enriched in basic and acidic residues. The tract at residues 84–107 (IGRDPDDRQMPSRGAASGFRGSAG) is disordered. Phosphoserine is present on S109. Residues 173-192 (NRGGSPFMRQQPRSRQQQQQ) form a disordered region. Residues 181-192 (RQQPRSRQQQQQ) show a composition bias toward low complexity.

The protein is Protein HLJ1 (HLJ1) of Saccharomyces cerevisiae (strain ATCC 204508 / S288c) (Baker's yeast).